A 281-amino-acid polypeptide reads, in one-letter code: Translation initiation factor IF3-4, chloroplastic (281 aa).

A chloroplast-targeting transit peptide spans 1–51 (MAGITSTVGFNAILAGATKTVSHPVKSKLFGLRLCVPEFSIVSLSPYHHRR). Disordered stretches follow at residues 63-86 (GGGGSRFPGDRRGRQKESEDDDSL) and 253-281 (KVQEPPPKKKKKPADDKVSAANITATQDI). Basic and acidic residues-rich tracts occupy residues 70–79 (PGDRRGRQKE) and 253–270 (KVQEPPPKKKKKPADDKV).

The protein belongs to the IF-3 family. In terms of assembly, monomer.

Its subcellular location is the plastid. The protein resides in the chloroplast. Chloroplast translation initiation factor that is essential for the coordination of leaf and chloroplast development. IF-3 binds to the 30S ribosomal subunit and shifts the equilibrium between 70S ribosomes and their 50S and 30S subunits in favor of the free subunits, thus enhancing the availability of 30S subunits on which protein synthesis initiation begins. The polypeptide is Translation initiation factor IF3-4, chloroplastic (Arabidopsis thaliana (Mouse-ear cress)).